A 449-amino-acid chain; its full sequence is L-lysine-epsilon aminotransferase (449 aa).

Residues Gly-128 and Ala-129 each contribute to the pyridoxal 5'-phosphate site. Residues Arg-170 and Gln-274 each coordinate 2-oxoglutarate. Arg-170 is an L-lysine binding site. Gln-274 contributes to the pyridoxal 5'-phosphate binding site. Lys-300 carries the post-translational modification N6-(pyridoxal phosphate)lysine. Position 422 (Arg-422) interacts with 2-oxoglutarate.

This sequence belongs to the class-III pyridoxal-phosphate-dependent aminotransferase family. The cofactor is pyridoxal 5'-phosphate.

The catalysed reaction is L-lysine + 2-oxoglutarate = (S)-2-amino-6-oxohexanoate + L-glutamate. Catalyzes the transfer of the terminal amino group of L-lysine to alpha-ketoglutarate to yield L-glutamate and 2-aminoadipate 6-semialdehyde ((S)-2-amino-6-oxohexanoate), which is spontaneously converted to the dehydrated form 1-piperideine 6-carboxylate. The sequence is that of L-lysine-epsilon aminotransferase from Mycobacterium bovis (strain ATCC BAA-935 / AF2122/97).